Here is a 728-residue protein sequence, read N- to C-terminus: Polyribonucleotide nucleotidyltransferase (728 aa).

Mg(2+)-binding residues include aspartate 503 and aspartate 509. In terms of domain architecture, KH spans 570-629 (PRLTTIKIPSDCIGMVIGKGGETIRGITEETGAEINIADDGTVTIACTTKEGTDAALATI). The S1 motif domain maps to 639–713 (GNIYVGKVRD…GKTKFALSIK (75 aa)).

The protein belongs to the polyribonucleotide nucleotidyltransferase family. The cofactor is Mg(2+).

It is found in the cytoplasm. The enzyme catalyses RNA(n+1) + phosphate = RNA(n) + a ribonucleoside 5'-diphosphate. Involved in mRNA degradation. Catalyzes the phosphorolysis of single-stranded polyribonucleotides processively in the 3'- to 5'-direction. The sequence is that of Polyribonucleotide nucleotidyltransferase from Chlorobium chlorochromatii (strain CaD3).